A 490-amino-acid chain; its full sequence is Bifunctional protein HldE (490 aa).

Residues 1-330 (MERKEIESLF…AEIGHAHPDS (330 aa)) are ribokinase. ATP is bound at residue 205–208 (NRKE). Residue Asp275 is part of the active site. The cytidylyltransferase stretch occupies residues 356–490 (FTNGCFDLLH…EKIRTGSIKE (135 aa)).

It in the N-terminal section; belongs to the carbohydrate kinase PfkB family. In the C-terminal section; belongs to the cytidylyltransferase family. In terms of assembly, homodimer.

The catalysed reaction is D-glycero-beta-D-manno-heptose 7-phosphate + ATP = D-glycero-beta-D-manno-heptose 1,7-bisphosphate + ADP + H(+). It carries out the reaction D-glycero-beta-D-manno-heptose 1-phosphate + ATP + H(+) = ADP-D-glycero-beta-D-manno-heptose + diphosphate. It functions in the pathway nucleotide-sugar biosynthesis; ADP-L-glycero-beta-D-manno-heptose biosynthesis; ADP-L-glycero-beta-D-manno-heptose from D-glycero-beta-D-manno-heptose 7-phosphate: step 1/4. The protein operates within nucleotide-sugar biosynthesis; ADP-L-glycero-beta-D-manno-heptose biosynthesis; ADP-L-glycero-beta-D-manno-heptose from D-glycero-beta-D-manno-heptose 7-phosphate: step 3/4. Its function is as follows. Catalyzes the phosphorylation of D-glycero-D-manno-heptose 7-phosphate at the C-1 position to selectively form D-glycero-beta-D-manno-heptose-1,7-bisphosphate. In terms of biological role, catalyzes the ADP transfer from ATP to D-glycero-beta-D-manno-heptose 1-phosphate, yielding ADP-D-glycero-beta-D-manno-heptose. This Geotalea uraniireducens (strain Rf4) (Geobacter uraniireducens) protein is Bifunctional protein HldE.